Consider the following 946-residue polypeptide: Alanine--tRNA ligase, cytoplasmic (946 aa).

Zn(2+)-binding residues include H591, H595, C710, and H714.

The protein belongs to the class-II aminoacyl-tRNA synthetase family. Monomer. Zn(2+) is required as a cofactor.

The protein resides in the cytoplasm. The enzyme catalyses tRNA(Ala) + L-alanine + ATP = L-alanyl-tRNA(Ala) + AMP + diphosphate. Its function is as follows. Catalyzes the attachment of alanine to tRNA(Ala) in a two-step reaction: alanine is first activated by ATP to form Ala-AMP and then transferred to the acceptor end of tRNA(Ala). Also edits incorrectly charged tRNA(Ala) via its editing domain. In Dictyostelium discoideum (Social amoeba), this protein is Alanine--tRNA ligase, cytoplasmic (alaS).